The chain runs to 349 residues: Guanine nucleotide-binding protein-like alpha-10 subunit (349 aa).

Positions 33-349 constitute a G-alpha domain; sequence EEIRVLIYGQ…LNITYNSVKN (317 aa). The interval 36–49 is G1 motif; the sequence is RVLIYGQKKVGVTT. Positions 168-176 are G2 motif; that stretch reads DLNFIKLTQ. The tract at residues 191–200 is G3 motif; the sequence is IKMIEMGIQT. GTP contacts are provided by residues 195 to 199 and 266 to 269; these read EMGIQ and NKKD. The segment at 262 to 269 is G4 motif; that stretch reads IVFFNKKD. Residues 320–325 form a G5 motif region; the sequence is NEESEV.

Belongs to the G-alpha family.

The sequence is that of Guanine nucleotide-binding protein-like alpha-10 subunit (gpaJ) from Dictyostelium discoideum (Social amoeba).